We begin with the raw amino-acid sequence, 436 residues long: Acetylcholine receptor non-alpha chain (436 aa).

The Extracellular portion of the chain corresponds to isoleucine 1–proline 195. Asparagine 62 carries an N-linked (GlcNAc...) asparagine glycan. Cysteines 89 and 103 form a disulfide. Asparagine 140 is a glycosylation site (N-linked (GlcNAc...) asparagine). 3 consecutive transmembrane segments (helical) span residues leucine 196–leucine 219, valine 227–lysine 245, and tyrosine 261–leucine 280. Over asparagine 281 to arginine 404 the chain is Cytoplasmic. The chain crosses the membrane as a helical span at residues leucine 405 to phenylalanine 423.

The protein belongs to the ligand-gated ion channel (TC 1.A.9) family. Acetylcholine receptor (TC 1.A.9.1) subfamily.

The protein resides in the postsynaptic cell membrane. Its subcellular location is the cell membrane. Functionally, after binding acetylcholine, the AChR responds by an extensive change in conformation that affects all subunits and leads to opening of an ion-conducting channel across the plasma membrane. This is Acetylcholine receptor non-alpha chain from Onchocerca volvulus.